The following is a 417-amino-acid chain: Exodeoxyribonuclease 7 large subunit (417 aa).

Belongs to the XseA family. Heterooligomer composed of large and small subunits.

It localises to the cytoplasm. It carries out the reaction Exonucleolytic cleavage in either 5'- to 3'- or 3'- to 5'-direction to yield nucleoside 5'-phosphates.. Its function is as follows. Bidirectionally degrades single-stranded DNA into large acid-insoluble oligonucleotides, which are then degraded further into small acid-soluble oligonucleotides. This chain is Exodeoxyribonuclease 7 large subunit, found in Lactococcus lactis subsp. cremoris (strain MG1363).